A 297-amino-acid polypeptide reads, in one-letter code: MNKAQGTIVSAISGYYDVEIENEVVRTRARGVFRDRKQKPLVGDRVVVQLDNQGMNYLIEILPRTNEIGRPAVANVSKVLLVISAVEPDFSLELLDRYLTFFAWKNVGVVIYLSKADITPTEKLKAIKCKLDYYQKIGYSVFEDAEELERQLPTMIQKDQIWTLAGQSGAGKSTLLNKLENEANQETGAISTALNRGKHTTRQVKLFKYSSGFIADTPGFSAIDLFKIKVDELENYFYDLKDASVKCKFRRCQHIKEPGCEVKKLIEEGKIAKSRYDSYLKIRQEISENRMPEYLKK.

One can recognise a CP-type G domain in the interval 65 to 223; it reads TNEIGRPAVA…IADTPGFSAI (159 aa). Residues 114–117 and 166–174 each bind GTP; these read SKAD and GQSGAGKST. Zn(2+)-binding residues include Cys-247, Cys-252, His-254, and Cys-260.

Belongs to the TRAFAC class YlqF/YawG GTPase family. RsgA subfamily. In terms of assembly, monomer. Associates with 30S ribosomal subunit, binds 16S rRNA. Zn(2+) is required as a cofactor.

It localises to the cytoplasm. Functionally, one of several proteins that assist in the late maturation steps of the functional core of the 30S ribosomal subunit. Helps release RbfA from mature subunits. May play a role in the assembly of ribosomal proteins into the subunit. Circularly permuted GTPase that catalyzes slow GTP hydrolysis, GTPase activity is stimulated by the 30S ribosomal subunit. The sequence is that of Small ribosomal subunit biogenesis GTPase RsgA from Lactobacillus gasseri (strain ATCC 33323 / DSM 20243 / BCRC 14619 / CIP 102991 / JCM 1131 / KCTC 3163 / NCIMB 11718 / NCTC 13722 / AM63).